Here is a 218-residue protein sequence, read N- to C-terminus: 3-dehydroquinate dehydratase (218 aa).

3-dehydroquinate-binding positions include 29-31 (EFR) and Arg-56. His-116 functions as the Proton donor/acceptor in the catalytic mechanism. Lys-142 (schiff-base intermediate with substrate) is an active-site residue. 3-dehydroquinate-binding residues include Arg-180, Ser-200, and Gln-204.

The protein belongs to the type-I 3-dehydroquinase family. Homodimer.

The enzyme catalyses 3-dehydroquinate = 3-dehydroshikimate + H2O. It functions in the pathway metabolic intermediate biosynthesis; chorismate biosynthesis; chorismate from D-erythrose 4-phosphate and phosphoenolpyruvate: step 3/7. Functionally, involved in the third step of the chorismate pathway, which leads to the biosynthesis of aromatic amino acids. Catalyzes the cis-dehydration of 3-dehydroquinate (DHQ) and introduces the first double bond of the aromatic ring to yield 3-dehydroshikimate. This is 3-dehydroquinate dehydratase from Methanococcus maripaludis (strain DSM 14266 / JCM 13030 / NBRC 101832 / S2 / LL).